We begin with the raw amino-acid sequence, 423 residues long: Elongation factor 1-alpha (423 aa).

The 207-residue stretch at 5–211 folds into the tr-type G domain; that stretch reads KEHINLAFIG…DNLEPPEKPT (207 aa). The tract at residues 14-21 is G1; the sequence is GHVDHGKS. 14 to 21 provides a ligand contact to GTP; it reads GHVDHGKS. Ser21 lines the Mg(2+) pocket. The interval 60–64 is G2; the sequence is GVTID. A G3 region spans residues 81–84; it reads DCPG. GTP-binding positions include 81 to 85 and 136 to 139; these read DCPGH and NKMD. The tract at residues 136-139 is G4; that stretch reads NKMD. The interval 175 to 177 is G5; that stretch reads SAF.

This sequence belongs to the TRAFAC class translation factor GTPase superfamily. Classic translation factor GTPase family. EF-Tu/EF-1A subfamily.

Its subcellular location is the cytoplasm. It carries out the reaction GTP + H2O = GDP + phosphate + H(+). Its function is as follows. GTP hydrolase that promotes the GTP-dependent binding of aminoacyl-tRNA to the A-site of ribosomes during protein biosynthesis. The sequence is that of Elongation factor 1-alpha from Methanopyrus kandleri (strain AV19 / DSM 6324 / JCM 9639 / NBRC 100938).